The sequence spans 122 residues: Double-headed protease inhibitor, submandibular gland (122 aa).

Kazal-like domains lie at 10–70 (GGRK…ECDI) and 71–121 (ECTQ…QCQS). 6 cysteine pairs are disulfide-bonded: Cys16–Cys50, Cys28–Cys47, Cys36–Cys68, Cys72–Cys101, Cys79–Cys98, and Cys87–Cys119.

It is found in the secreted. Functionally, this inhibitor is composed of two homologous actively inhibiting halves: one which inhibits trypsin, the other which inhibits elastase. This Martes martes (European pine marten) protein is Double-headed protease inhibitor, submandibular gland.